A 353-amino-acid chain; its full sequence is MDENKQRALAAALGQIEKQFGKGSIMRLGDTQTLDIESISTGSLSLDVALGIGGLPMGRIVEIFGPESSGKTTLTLSVIACAQAAGKTCAFIDAEHALDPIYAAKLGVNVDDLLVSQPDTGEQALEICDALVRSGAVDVIIVDSVAALTPKAEIEGEMGDSHVGLQARLMSQALRKLTANIKNANCLVVFINQIRMKIGVMFGNPETTTGGNALKFYSSVRLDIRRIGAIKEGDEVVGNETRVKVVKNKVAPPFRQAEFQILYGAGISKESELIDLGVKHKLLDKSGAWYSYNGDKIGQGKANSMKFLQENTTISAELEGKLRELLLSHAAATDAERAGAEREDNAAADDENF.

ATP is bound at residue 65–72 (GPESSGKT). The segment covering 334–345 (DAERAGAEREDN) has biased composition (basic and acidic residues). Residues 334–353 (DAERAGAEREDNAAADDENF) are disordered.

It belongs to the RecA family.

The protein resides in the cytoplasm. Its function is as follows. Can catalyze the hydrolysis of ATP in the presence of single-stranded DNA, the ATP-dependent uptake of single-stranded DNA by duplex DNA, and the ATP-dependent hybridization of homologous single-stranded DNAs. It interacts with LexA causing its activation and leading to its autocatalytic cleavage. The sequence is that of Protein RecA from Edwardsiella ictaluri (strain 93-146).